A 188-amino-acid polypeptide reads, in one-letter code: Elongation factor P (188 aa).

It belongs to the elongation factor P family.

The protein resides in the cytoplasm. The protein operates within protein biosynthesis; polypeptide chain elongation. Involved in peptide bond synthesis. Stimulates efficient translation and peptide-bond synthesis on native or reconstituted 70S ribosomes in vitro. Probably functions indirectly by altering the affinity of the ribosome for aminoacyl-tRNA, thus increasing their reactivity as acceptors for peptidyl transferase. The polypeptide is Elongation factor P (Rickettsia massiliae (strain Mtu5)).